The primary structure comprises 305 residues: Nucleotide-binding protein Saro_2904 (305 aa).

Position 15–22 (15–22 (GLLGAGKT)) interacts with ATP. 68 to 71 (DTRT) is a GTP binding site.

Belongs to the RapZ-like family.

Displays ATPase and GTPase activities. The protein is Nucleotide-binding protein Saro_2904 of Novosphingobium aromaticivorans (strain ATCC 700278 / DSM 12444 / CCUG 56034 / CIP 105152 / NBRC 16084 / F199).